The chain runs to 447 residues: Na(+)-translocating NADH-quinone reductase subunit A (447 aa).

Belongs to the NqrA family. Composed of six subunits; NqrA, NqrB, NqrC, NqrD, NqrE and NqrF.

It catalyses the reaction a ubiquinone + n Na(+)(in) + NADH + H(+) = a ubiquinol + n Na(+)(out) + NAD(+). Its function is as follows. NQR complex catalyzes the reduction of ubiquinone-1 to ubiquinol by two successive reactions, coupled with the transport of Na(+) ions from the cytoplasm to the periplasm. NqrA to NqrE are probably involved in the second step, the conversion of ubisemiquinone to ubiquinol. The polypeptide is Na(+)-translocating NADH-quinone reductase subunit A (Neisseria meningitidis serogroup C / serotype 2a (strain ATCC 700532 / DSM 15464 / FAM18)).